The primary structure comprises 412 residues: Probable serine/threonine-protein kinase PBL4 (412 aa).

A lipid anchor (N-myristoyl glycine) is attached at glycine 2. Cysteine 4 carries the S-palmitoyl cysteine lipid modification. The segment at 14–40 (RESPYRGSSRISAKRSQSSRLSSLTIQ) is disordered. Low complexity predominate over residues 21 to 40 (SSRISAKRSQSSRLSSLTIQ). Position 72 is a phosphothreonine (threonine 72). Positions 83–369 (FRPDSVIGEG…STLEELEMTL (287 aa)) constitute a Protein kinase domain. ATP-binding positions include 89–97 (IGEGGFGYV) and lysine 121. Tyrosine 167 is modified (phosphotyrosine). Aspartate 215 serves as the catalytic Proton acceptor. Phosphoserine occurs at positions 219 and 249. 2 positions are modified to phosphothreonine: threonine 250 and threonine 255. Position 263 is a phosphotyrosine (tyrosine 263).

It belongs to the protein kinase superfamily. Ser/Thr protein kinase family.

It is found in the cell membrane. It carries out the reaction L-seryl-[protein] + ATP = O-phospho-L-seryl-[protein] + ADP + H(+). The catalysed reaction is L-threonyl-[protein] + ATP = O-phospho-L-threonyl-[protein] + ADP + H(+). May be involved in plant defense signaling. The sequence is that of Probable serine/threonine-protein kinase PBL4 from Arabidopsis thaliana (Mouse-ear cress).